The primary structure comprises 28 residues: Short cationic peptide-1c (28 aa).

Glutamic acid 1-amide is present on Glu-28.

In terms of tissue distribution, expressed by the venom gland.

The protein resides in the secreted. The protein is Short cationic peptide-1c of Cupiennius salei (American wandering spider).